Reading from the N-terminus, the 71-residue chain is DNA-directed RNA polymerase subunit omega (71 aa).

This sequence belongs to the RNA polymerase subunit omega family. As to quaternary structure, the RNAP catalytic core consists of 2 alpha, 1 beta, 1 beta' and 1 omega subunit. When a sigma factor is associated with the core the holoenzyme is formed, which can initiate transcription.

The catalysed reaction is RNA(n) + a ribonucleoside 5'-triphosphate = RNA(n+1) + diphosphate. Promotes RNA polymerase assembly. Latches the N- and C-terminal regions of the beta' subunit thereby facilitating its interaction with the beta and alpha subunits. The protein is DNA-directed RNA polymerase subunit omega of Campylobacter concisus (strain 13826).